A 70-amino-acid polypeptide reads, in one-letter code: Large ribosomal subunit protein bL31 (70 aa).

Zn(2+) is bound by residues Cys-16, Cys-18, Cys-37, and Cys-40. The tract at residues Gln-48 to Lys-70 is disordered.

It belongs to the bacterial ribosomal protein bL31 family. Type A subfamily. In terms of assembly, part of the 50S ribosomal subunit. Requires Zn(2+) as cofactor.

Functionally, binds the 23S rRNA. This Photobacterium profundum (strain SS9) protein is Large ribosomal subunit protein bL31.